We begin with the raw amino-acid sequence, 114 residues long: Putative antiporter subunit mnhC2 (114 aa).

A run of 3 helical transmembrane segments spans residues 3–23 (LILL…ILSI), 28–48 (IVIG…SMGT), and 72–92 (AIVL…LVLV).

This sequence belongs to the CPA3 antiporters (TC 2.A.63) subunit C family. May form a heterooligomeric complex that consists of seven subunits: mnhA2, mnhB2, mnhC2, mnhD2, mnhE2, mnhF2 and mnhG2.

The protein resides in the cell membrane. This Staphylococcus aureus (strain MRSA252) protein is Putative antiporter subunit mnhC2 (mnhC2).